A 311-amino-acid chain; its full sequence is Haloalkane dehalogenase (311 aa).

Residues 30–148 enclose the AB hydrolase-1 domain; sequence AIVFQHGNPS…WDDFPDEVAQ (119 aa). Asp-107 acts as the Nucleophile in catalysis. The Proton donor role is filled by Glu-131. The Proton acceptor role is filled by His-272.

Belongs to the haloalkane dehalogenase family. Type 2 subfamily. Monomer.

The catalysed reaction is 1-haloalkane + H2O = a halide anion + a primary alcohol + H(+). Catalyzes hydrolytic cleavage of carbon-halogen bonds in halogenated aliphatic compounds, leading to the formation of the corresponding primary alcohols, halide ions and protons. This chain is Haloalkane dehalogenase, found in Mycolicibacterium smegmatis (strain ATCC 700084 / mc(2)155) (Mycobacterium smegmatis).